The chain runs to 130 residues: Small ribosomal subunit protein uS8 (130 aa).

Belongs to the universal ribosomal protein uS8 family. In terms of assembly, part of the 30S ribosomal subunit. Contacts proteins S5 and S12.

One of the primary rRNA binding proteins, it binds directly to 16S rRNA central domain where it helps coordinate assembly of the platform of the 30S subunit. The protein is Small ribosomal subunit protein uS8 of Phytoplasma australiense.